Reading from the N-terminus, the 417-residue chain is NADH-quinone oxidoreductase subunit D 1 (417 aa).

Belongs to the complex I 49 kDa subunit family. NDH-1 is composed of 14 different subunits. Subunits NuoB, C, D, E, F, and G constitute the peripheral sector of the complex.

It localises to the cell membrane. The enzyme catalyses a quinone + NADH + 5 H(+)(in) = a quinol + NAD(+) + 4 H(+)(out). Functionally, NDH-1 shuttles electrons from NADH, via FMN and iron-sulfur (Fe-S) centers, to quinones in the respiratory chain. The immediate electron acceptor for the enzyme in this species is believed to be ubiquinone. Couples the redox reaction to proton translocation (for every two electrons transferred, four hydrogen ions are translocated across the cytoplasmic membrane), and thus conserves the redox energy in a proton gradient. This is NADH-quinone oxidoreductase subunit D 1 from Roseiflexus castenholzii (strain DSM 13941 / HLO8).